We begin with the raw amino-acid sequence, 542 residues long: CTP synthase (542 aa).

The tract at residues 1–265 (MTRYIFVTGG…DDIVVERFGL (265 aa)) is amidoligase domain. Residue S13 coordinates CTP. Position 13 (S13) interacts with UTP. ATP-binding positions include 14 to 19 (SLGKGI) and D71. The Mg(2+) site is built by D71 and E139. Residues 146–148 (DIE), 186–191 (KTKPTQ), and K222 each bind CTP. Residues 186 to 191 (KTKPTQ) and K222 contribute to the UTP site. In terms of domain architecture, Glutamine amidotransferase type-1 spans 290–541 (TIAMVGKYME…VNAALKYSGK (252 aa)). An L-glutamine-binding site is contributed by G351. C378 functions as the Nucleophile; for glutamine hydrolysis in the catalytic mechanism. L-glutamine is bound by residues 379-382 (LGMQ), E402, and R469. Active-site residues include H514 and E516.

Belongs to the CTP synthase family. Homotetramer.

The enzyme catalyses UTP + L-glutamine + ATP + H2O = CTP + L-glutamate + ADP + phosphate + 2 H(+). It carries out the reaction L-glutamine + H2O = L-glutamate + NH4(+). It catalyses the reaction UTP + NH4(+) + ATP = CTP + ADP + phosphate + 2 H(+). It functions in the pathway pyrimidine metabolism; CTP biosynthesis via de novo pathway; CTP from UDP: step 2/2. With respect to regulation, allosterically activated by GTP, when glutamine is the substrate; GTP has no effect on the reaction when ammonia is the substrate. The allosteric effector GTP functions by stabilizing the protein conformation that binds the tetrahedral intermediate(s) formed during glutamine hydrolysis. Inhibited by the product CTP, via allosteric rather than competitive inhibition. In terms of biological role, catalyzes the ATP-dependent amination of UTP to CTP with either L-glutamine or ammonia as the source of nitrogen. Regulates intracellular CTP levels through interactions with the four ribonucleotide triphosphates. In Pseudomonas aeruginosa (strain LESB58), this protein is CTP synthase.